We begin with the raw amino-acid sequence, 395 residues long: Ketoisovalerate oxidoreductase subunit VorA (395 aa).

As to quaternary structure, heterotetramer of one alpha, one beta, one delta and one gamma chain.

It carries out the reaction 3-methyl-2-oxobutanoate + 2 oxidized [2Fe-2S]-[ferredoxin] + CoA = 2-methylpropanoyl-CoA + 2 reduced [2Fe-2S]-[ferredoxin] + CO2 + H(+). In Pyrococcus abyssi (strain GE5 / Orsay), this protein is Ketoisovalerate oxidoreductase subunit VorA (vorA).